The sequence spans 457 residues: RNA-binding suppressor of PAS kinase protein 1 (457 aa).

The R3H domain maps to 26–88 (RIFIIELENS…SCVILFKGEN (63 aa)). 3 disordered regions span residues 142–181 (IDGNTRTPNSNLTANSNKDQKIEIDDKSSTDLEQERIEKE), 195–291 (LNKS…NGGY), and 406–457 (FQGK…KLNI). Residues 145 to 158 (NTRTPNSNLTANSN) are compositionally biased toward polar residues. Over residues 159-181 (KDQKIEIDDKSSTDLEQERIEKE) the composition is skewed to basic and acidic residues. Phosphoserine is present on serine 198. A compositionally biased stretch (low complexity) spans 226-247 (SNTQTSNGSVSSSSPFNSSVTT). The span at 248-258 (IQVNKPQQQFY) shows a compositional bias: polar residues. Over residues 418 to 435 (KRSDDSNSNKNEGIRRAS) the composition is skewed to basic and acidic residues. A phosphoserine mark is found at serine 435, serine 439, and serine 447. Basic and acidic residues predominate over residues 443–457 (RDTDSVEMKFDKLNI).

The protein localises to the cytoplasm. The polypeptide is RNA-binding suppressor of PAS kinase protein 1 (RBS1) (Saccharomyces cerevisiae (strain ATCC 204508 / S288c) (Baker's yeast)).